We begin with the raw amino-acid sequence, 335 residues long: Nucleoid-associated protein KPN78578_25800 (335 aa).

The protein belongs to the YejK family.

It localises to the cytoplasm. The protein localises to the nucleoid. In Klebsiella pneumoniae subsp. pneumoniae (strain ATCC 700721 / MGH 78578), this protein is Nucleoid-associated protein KPN78578_25800.